The primary structure comprises 402 residues: Putative RNA-guided DNA endonuclease (402 aa).

Aspartate 188 is an active-site residue. The segment at lysine 202 to lysine 239 is disordered. Residues threonine 204 to arginine 225 are compositionally biased toward basic and acidic residues. Basic residues predominate over residues lysine 226–lysine 239. The active site involves glutamate 272. Zn(2+) is bound by residues cysteine 325, cysteine 328, cysteine 344, and cysteine 346. Aspartate 353 is an active-site residue. A disordered region spans residues glycine 373–leucine 402.

In the N-terminal section; belongs to the transposase 2 family. It in the C-terminal section; belongs to the transposase 35 family.

Its function is as follows. An RNA-guided dsDNA endonuclease. When guided by an RNA derived from the right-end element of its insertion sequence element (IS), cleaves DNA downstream of the transposon-associated motif (TAM). Cleaves supercoiled and linear DNA in a staggered manner 15-21 bases from the TAM yielding 5'-overhangs. Binds reRNA, an approximately 150 nucleotide base sRNA derived from the 3' end of its own gene, the right end (RE) of the insertion sequence (IS) plus sequence downstream of the IS. In Streptomyces pristinaespiralis, this protein is Putative RNA-guided DNA endonuclease.